A 341-amino-acid polypeptide reads, in one-letter code: MAKSHTLNPEEEFEEESGLRPSLLSEFIGQKEVLNNLTVYVQAAKNRKRALDHVLISGPPGLGKTTLAGIISNELGTRLTITSAPVITKGADLARLLTSMGENEILFIDEIHTLPKKLEEILYPAMENYMIDLVIGEGVTAQMVQIPLKPFTLVGATTRSGLISEPLKSRFGIQLRLDYYNDEEMKQIVLRSSKILGVLIEDDAALEIGKRSRKTPRIANHLLKRIRDFSEVEGNLSVKKNLCLKAFEKMGIDDLGLDGMDRQILDCMIDRYKGGPVGLKAIAVVVGEEEKTIEDTYESFMVRIGLINRTPAGRVATEKAYRQLKRMEDFSVHHGQDPTLF.

Positions 1–180 (MAKSHTLNPE…FGIQLRLDYY (180 aa)) are large ATPase domain (RuvB-L). ATP-binding residues include Leu-19, Arg-20, Gly-61, Lys-64, Thr-65, Thr-66, Arg-170, Tyr-180, and Arg-217. A Mg(2+)-binding site is contributed by Thr-65. Positions 181 to 251 (NDEEMKQIVL…LCLKAFEKMG (71 aa)) are small ATPAse domain (RuvB-S). Residues 254–341 (DLGLDGMDRQ…VHHGQDPTLF (88 aa)) form a head domain (RuvB-H) region. Residues Arg-309 and Arg-314 each coordinate DNA.

This sequence belongs to the RuvB family. Homohexamer. Forms an RuvA(8)-RuvB(12)-Holliday junction (HJ) complex. HJ DNA is sandwiched between 2 RuvA tetramers; dsDNA enters through RuvA and exits via RuvB. An RuvB hexamer assembles on each DNA strand where it exits the tetramer. Each RuvB hexamer is contacted by two RuvA subunits (via domain III) on 2 adjacent RuvB subunits; this complex drives branch migration. In the full resolvosome a probable DNA-RuvA(4)-RuvB(12)-RuvC(2) complex forms which resolves the HJ.

It is found in the cytoplasm. The enzyme catalyses ATP + H2O = ADP + phosphate + H(+). Its function is as follows. The RuvA-RuvB-RuvC complex processes Holliday junction (HJ) DNA during genetic recombination and DNA repair, while the RuvA-RuvB complex plays an important role in the rescue of blocked DNA replication forks via replication fork reversal (RFR). RuvA specifically binds to HJ cruciform DNA, conferring on it an open structure. The RuvB hexamer acts as an ATP-dependent pump, pulling dsDNA into and through the RuvAB complex. RuvB forms 2 homohexamers on either side of HJ DNA bound by 1 or 2 RuvA tetramers; 4 subunits per hexamer contact DNA at a time. Coordinated motions by a converter formed by DNA-disengaged RuvB subunits stimulates ATP hydrolysis and nucleotide exchange. Immobilization of the converter enables RuvB to convert the ATP-contained energy into a lever motion, pulling 2 nucleotides of DNA out of the RuvA tetramer per ATP hydrolyzed, thus driving DNA branch migration. The RuvB motors rotate together with the DNA substrate, which together with the progressing nucleotide cycle form the mechanistic basis for DNA recombination by continuous HJ branch migration. Branch migration allows RuvC to scan DNA until it finds its consensus sequence, where it cleaves and resolves cruciform DNA. This is Holliday junction branch migration complex subunit RuvB from Leptospira interrogans serogroup Icterohaemorrhagiae serovar copenhageni (strain Fiocruz L1-130).